The primary structure comprises 263 residues: Syntaxin-73 (263 aa).

Residues 1–240 (MGVIDLITRV…TVTKLRSSRN (240 aa)) lie on the Cytoplasmic side of the membrane. A Phosphoserine modification is found at Ser12. One can recognise a t-SNARE coiled-coil homology domain in the interval 169-231 (YEMKRIKQAR…KSTNVRLKDT (63 aa)). A helical; Anchor for type IV membrane protein transmembrane segment spans residues 241–261 (FCIDIILLCILLGIAAFIYNS). Topologically, residues 262–263 (VK) are vesicular.

It belongs to the syntaxin family. Part of the t-SNARE complex. Expressed in root, leaf, stem, flower and silique.

Its subcellular location is the membrane. Its function is as follows. Vesicle trafficking protein that functions in the secretory pathway. The polypeptide is Syntaxin-73 (SYP73) (Arabidopsis thaliana (Mouse-ear cress)).